The following is a 161-amino-acid chain: 18.1 kDa class I heat shock protein (161 aa).

One can recognise a sHSP domain in the interval 47–161; that stretch reads ETAAFAGARI…PDVKSIQVTG (115 aa).

Belongs to the small heat shock protein (HSP20) family. May form oligomeric structures.

It is found in the cytoplasm. The polypeptide is 18.1 kDa class I heat shock protein (HSP18.1) (Oryza sativa subsp. japonica (Rice)).